A 171-amino-acid polypeptide reads, in one-letter code: 3-hydroxydecanoyl-[acyl-carrier-protein] dehydratase (171 aa).

His-70 is a catalytic residue.

It belongs to the thioester dehydratase family. FabA subfamily. Homodimer.

Its subcellular location is the cytoplasm. The catalysed reaction is a (3R)-hydroxyacyl-[ACP] = a (2E)-enoyl-[ACP] + H2O. It catalyses the reaction (3R)-hydroxydecanoyl-[ACP] = (2E)-decenoyl-[ACP] + H2O. It carries out the reaction (2E)-decenoyl-[ACP] = (3Z)-decenoyl-[ACP]. It participates in lipid metabolism; fatty acid biosynthesis. In terms of biological role, necessary for the introduction of cis unsaturation into fatty acids. Catalyzes the dehydration of (3R)-3-hydroxydecanoyl-ACP to E-(2)-decenoyl-ACP and then its isomerization to Z-(3)-decenoyl-ACP. Can catalyze the dehydratase reaction for beta-hydroxyacyl-ACPs with saturated chain lengths up to 16:0, being most active on intermediate chain length. The polypeptide is 3-hydroxydecanoyl-[acyl-carrier-protein] dehydratase (Stutzerimonas stutzeri (strain A1501) (Pseudomonas stutzeri)).